We begin with the raw amino-acid sequence, 473 residues long: Glutamate--tRNA ligase (473 aa).

The 'HIGH' region motif lies at 13-23; that stretch reads PSPTGFLHVGG. A 'KMSKS' region motif is present at residues 240-244; sequence KLSKR. Residue K243 coordinates ATP.

It belongs to the class-I aminoacyl-tRNA synthetase family. Glutamate--tRNA ligase type 1 subfamily. Monomer.

It localises to the cytoplasm. The catalysed reaction is tRNA(Glu) + L-glutamate + ATP = L-glutamyl-tRNA(Glu) + AMP + diphosphate. Catalyzes the attachment of glutamate to tRNA(Glu) in a two-step reaction: glutamate is first activated by ATP to form Glu-AMP and then transferred to the acceptor end of tRNA(Glu). The sequence is that of Glutamate--tRNA ligase from Shewanella denitrificans (strain OS217 / ATCC BAA-1090 / DSM 15013).